We begin with the raw amino-acid sequence, 215 residues long: Adenylate kinase (215 aa).

10–15 (GAGKGT) contributes to the ATP binding site. The interval 30–59 (STGDILRENVKNQTELGKKAKEYMDKGLLV) is NMP. AMP contacts are provided by residues threonine 31, arginine 36, 57-59 (LLV), 85-88 (GFPR), and glutamine 92. An LID region spans residues 126-163 (GRRICKSCGASFHVVYRPPKKEGICDICGGQLYQREDD). Arginine 127 contacts ATP. Zn(2+) is bound by residues cysteine 130 and cysteine 133. Position 136–137 (136–137 (SF)) interacts with ATP. Positions 150 and 153 each coordinate Zn(2+). AMP is bound by residues arginine 160 and arginine 171. Glutamate 199 provides a ligand contact to ATP.

Belongs to the adenylate kinase family. Monomer.

Its subcellular location is the cytoplasm. The enzyme catalyses AMP + ATP = 2 ADP. It functions in the pathway purine metabolism; AMP biosynthesis via salvage pathway; AMP from ADP: step 1/1. Catalyzes the reversible transfer of the terminal phosphate group between ATP and AMP. Plays an important role in cellular energy homeostasis and in adenine nucleotide metabolism. This chain is Adenylate kinase, found in Caldicellulosiruptor saccharolyticus (strain ATCC 43494 / DSM 8903 / Tp8T 6331).